The following is a 328-amino-acid chain: DNA polymerase III subunit delta' (328 aa).

In terms of assembly, DNA polymerase III contains a core (composed of alpha, epsilon and theta chains) that associates with a tau subunit. This core dimerizes to form the POLIII' complex. PolIII' associates with the gamma complex (composed of gamma, delta, delta', psi and chi chains) and with the beta chain to form the complete DNA polymerase III complex.

It carries out the reaction DNA(n) + a 2'-deoxyribonucleoside 5'-triphosphate = DNA(n+1) + diphosphate. In terms of biological role, DNA polymerase III is a complex, multichain enzyme responsible for most of the replicative synthesis in bacteria. This DNA polymerase also exhibits 3' to 5' exonuclease activity. The chain is DNA polymerase III subunit delta' (holB) from Buchnera aphidicola subsp. Schizaphis graminum (strain Sg).